The following is a 490-amino-acid chain: Ketol-acid reductoisomerase (NADP(+)) (490 aa).

Positions 16-207 (INKCRFMKKE…GGHRAGVLES (192 aa)) constitute a KARI N-terminal Rossmann domain. NADP(+)-binding positions include 44-47 (CGAQ), Lys67, Ser77, and 107-109 (DKQ). The active site involves His131. Gly157 lines the NADP(+) pocket. KARI C-terminal knotted domains follow at residues 208–343 (SFIA…TAPV) and 344–483 (YNEK…MKKM). Residues Asp216, Glu220, Glu388, and Glu392 each contribute to the Mg(2+) site. Position 413 (Ser413) interacts with substrate.

It belongs to the ketol-acid reductoisomerase family. Mg(2+) is required as a cofactor.

It carries out the reaction (2R)-2,3-dihydroxy-3-methylbutanoate + NADP(+) = (2S)-2-acetolactate + NADPH + H(+). The catalysed reaction is (2R,3R)-2,3-dihydroxy-3-methylpentanoate + NADP(+) = (S)-2-ethyl-2-hydroxy-3-oxobutanoate + NADPH + H(+). Its pathway is amino-acid biosynthesis; L-isoleucine biosynthesis; L-isoleucine from 2-oxobutanoate: step 2/4. The protein operates within amino-acid biosynthesis; L-valine biosynthesis; L-valine from pyruvate: step 2/4. In terms of biological role, involved in the biosynthesis of branched-chain amino acids (BCAA). Catalyzes an alkyl-migration followed by a ketol-acid reduction of (S)-2-acetolactate (S2AL) to yield (R)-2,3-dihydroxy-isovalerate. In the isomerase reaction, S2AL is rearranged via a Mg-dependent methyl migration to produce 3-hydroxy-3-methyl-2-ketobutyrate (HMKB). In the reductase reaction, this 2-ketoacid undergoes a metal-dependent reduction by NADPH to yield (R)-2,3-dihydroxy-isovalerate. The protein is Ketol-acid reductoisomerase (NADP(+)) of Buchnera aphidicola subsp. Acyrthosiphon pisum (strain 5A).